The following is a 250-amino-acid chain: Probable phosphatase VIBHAR_04983 (250 aa).

Zn(2+) is bound by residues H8, H10, H16, H41, E74, H102, H132, D194, and H196.

Belongs to the PHP family. Requires Zn(2+) as cofactor.

The chain is Probable phosphatase VIBHAR_04983 from Vibrio campbellii (strain ATCC BAA-1116).